The primary structure comprises 250 residues: Triosephosphate isomerase (250 aa).

Position 9 to 11 (9 to 11 (NWK)) interacts with substrate. The active-site Electrophile is the H94. Residue E166 is the Proton acceptor of the active site. Residues G172, S212, and 233 to 234 (GG) each bind substrate.

Belongs to the triosephosphate isomerase family. In terms of assembly, homodimer.

It is found in the cytoplasm. It carries out the reaction D-glyceraldehyde 3-phosphate = dihydroxyacetone phosphate. It functions in the pathway carbohydrate biosynthesis; gluconeogenesis. Its pathway is carbohydrate degradation; glycolysis; D-glyceraldehyde 3-phosphate from glycerone phosphate: step 1/1. Functionally, involved in the gluconeogenesis. Catalyzes stereospecifically the conversion of dihydroxyacetone phosphate (DHAP) to D-glyceraldehyde-3-phosphate (G3P). The polypeptide is Triosephosphate isomerase (Thermus thermophilus (strain ATCC 27634 / DSM 579 / HB8)).